Here is a 223-residue protein sequence, read N- to C-terminus: Ribosomal RNA small subunit methyltransferase Nep1 (223 aa).

Residues G181, G186, and 199-204 (LYREPL) contribute to the S-adenosyl-L-methionine site.

The protein belongs to the class IV-like SAM-binding methyltransferase superfamily. RNA methyltransferase NEP1 family. As to quaternary structure, homodimer.

The catalysed reaction is a pseudouridine in rRNA + S-adenosyl-L-methionine = an N(1)-methylpseudouridine in rRNA + S-adenosyl-L-homocysteine + H(+). Its function is as follows. Methyltransferase involved in ribosomal biogenesis. Specifically catalyzes the N1-methylation of the pseudouridine corresponding to position 914 in M.jannaschii 16S rRNA. The polypeptide is Ribosomal RNA small subunit methyltransferase Nep1 (Pyrococcus furiosus (strain ATCC 43587 / DSM 3638 / JCM 8422 / Vc1)).